The chain runs to 344 residues: Mitochondrial substrate carrier family protein D (344 aa).

Topologically, residues 1-22 (MDSTKTNNKWAAAGILNSVGKD) are mitochondrial intermembrane. 3 Solcar repeats span residues 17 to 104 (NSVG…CQSY), 119 to 212 (IPYH…MKRK), and 239 to 327 (VPAW…TRNL). A helical transmembrane segment spans residues 23–43 (FVAGSVGGMSSIMAGHPFDTI). At 44 to 75 (KVMLQDASGNLPKFKNGFQALKYIMKVDGIKG) the chain is on the mitochondrial matrix side. The chain crosses the membrane as a helical span at residues 76 to 96 (IYRGLSVPLFSVSFTNSVFFA). Over 97 to 116 (TNNFCQSYFHPPCKDENGED) the chain is Mitochondrial intermembrane. Residues 117–137 (ILIPYHKAAAAGAIAGGVISL) form a helical membrane-spanning segment. The Mitochondrial matrix portion of the chain corresponds to 138 to 186 (LITPRDLVKSKLQVQCRPFGSTNVSLQYKGPIDVIRQTIKRDGIKGMFK). A helical membrane pass occupies residues 187–207 (GIRSTFCRDIPGDAVYFVVYE). Residues 208–238 (FMKRKLLALSKNNNNNNNNNDNNDNSSPKAG) lie on the Mitochondrial intermembrane side of the membrane. A helical transmembrane segment spans residues 239-259 (VPAWVAIGAGGCAGMSFWMSI). Residues 260–301 (YPMDVVKTRIQTQPDHLPPQYTSVLQTITKIYREEGISVFFR) lie on the Mitochondrial matrix side of the membrane. The helical transmembrane segment at 302-321 (GFSATILRAFPTSAVNFLMY) threads the bilayer. Topologically, residues 322–344 (ETTRNLLNSKDPFYNNNDHYNAE) are mitochondrial intermembrane.

It belongs to the mitochondrial carrier (TC 2.A.29) family.

Its subcellular location is the mitochondrion inner membrane. Calcium-dependent mitochondrial solute carrier. Mitochondrial solute carriers shuttle metabolites, nucleotides, and cofactors through the mitochondrial inner membrane. The sequence is that of Mitochondrial substrate carrier family protein D (mcfD) from Dictyostelium discoideum (Social amoeba).